The sequence spans 205 residues: Recombination protein RecR (205 aa).

The C4-type zinc-finger motif lies at 60-75 (CKVCHNISDTETCQIC). The 96-residue stretch at 83-178 (SMVCVVENIR…KLSVLARGVS (96 aa)) folds into the Toprim domain.

Belongs to the RecR family.

Its function is as follows. May play a role in DNA repair. It seems to be involved in an RecBC-independent recombinational process of DNA repair. It may act with RecF and RecO. In Bacteroides fragilis (strain ATCC 25285 / DSM 2151 / CCUG 4856 / JCM 11019 / LMG 10263 / NCTC 9343 / Onslow / VPI 2553 / EN-2), this protein is Recombination protein RecR.